A 75-amino-acid polypeptide reads, in one-letter code: RNA-binding protein KhpA (75 aa).

In terms of domain architecture, KH spans 29 to 75 (SIILELKVAPEDMGKVIGKQGRIAKAIRTVIKAAAVKENKRVVVEII).

This sequence belongs to the KhpA RNA-binding protein family. Forms a complex with KhpB.

It is found in the cytoplasm. Functionally, a probable RNA chaperone. Forms a complex with KhpB which binds to cellular RNA and controls its expression. Plays a role in peptidoglycan (PG) homeostasis and cell length regulation. This Clostridium acetobutylicum (strain ATCC 824 / DSM 792 / JCM 1419 / IAM 19013 / LMG 5710 / NBRC 13948 / NRRL B-527 / VKM B-1787 / 2291 / W) protein is RNA-binding protein KhpA.